The sequence spans 842 residues: Elongation factor 2 (842 aa).

In terms of domain architecture, tr-type G spans 17 to 253; sequence TNVRNMSVIA…LWGDSYFNPK (237 aa). GTP is bound by residues 26–33, 158–161, and 213–215; these read AHVDHGKS, NKVD, and SGL. H699 carries the post-translational modification Diphthamide.

This sequence belongs to the TRAFAC class translation factor GTPase superfamily. Classic translation factor GTPase family. EF-G/EF-2 subfamily.

Its subcellular location is the cytoplasm. The enzyme catalyses GTP + H2O = GDP + phosphate + H(+). Catalyzes the GTP-dependent ribosomal translocation step during translation elongation. During this step, the ribosome changes from the pre-translocational (PRE) to the post-translocational (POST) state as the newly formed A-site-bound peptidyl-tRNA and P-site-bound deacylated tRNA move to the P and E sites, respectively. Catalyzes the coordinated movement of the two tRNA molecules, the mRNA and conformational changes in the ribosome. In Eremothecium gossypii (strain ATCC 10895 / CBS 109.51 / FGSC 9923 / NRRL Y-1056) (Yeast), this protein is Elongation factor 2 (EFT1).